The following is a 234-amino-acid chain: Carboxymethylenebutenolidase 1 (234 aa).

Catalysis depends on residues Cys-123, Asp-171, and His-201.

The protein belongs to the dienelactone hydrolase family. As to quaternary structure, monomer.

It carries out the reaction 2-(5-oxo-2,5-dihydrofuran-2-ylidene)acetate + H2O = 4-oxohex-2-enedioate + H(+). It functions in the pathway aromatic compound metabolism; 3-chlorocatechol degradation. Ring cleavage of cyclic ester dienelactone to produce maleylacetate. This is Carboxymethylenebutenolidase 1 (tfdEI) from Cupriavidus pinatubonensis (strain JMP 134 / LMG 1197) (Cupriavidus necator (strain JMP 134)).